Consider the following 145-residue polypeptide: 6-pyruvoyl tetrahydrobiopterin synthase (145 aa).

Residue serine 19 is modified to Phosphoserine. Histidine 24 contacts Zn(2+). Residue serine 28 is modified to Phosphoserine. Cysteine 43 serves as the catalytic Proton acceptor. Histidine 49 and histidine 51 together coordinate Zn(2+). Catalysis depends on histidine 90, which acts as the Charge relay system. Position 128 is a phosphotyrosine (tyrosine 128). Glutamate 134 functions as the Charge relay system in the catalytic mechanism.

This sequence belongs to the PTPS family. As to quaternary structure, homohexamer formed of two homotrimers in a head to head fashion. The cofactor is Zn(2+). Phosphorylation of Ser-19 is required for maximal enzyme activity.

The catalysed reaction is 7,8-dihydroneopterin 3'-triphosphate = 6-pyruvoyl-5,6,7,8-tetrahydropterin + triphosphate + H(+). It functions in the pathway cofactor biosynthesis; tetrahydrobiopterin biosynthesis; tetrahydrobiopterin from 7,8-dihydroneopterin triphosphate: step 1/3. Involved in the biosynthesis of tetrahydrobiopterin, an essential cofactor of aromatic amino acid hydroxylases. Catalyzes the transformation of 7,8-dihydroneopterin triphosphate into 6-pyruvoyl tetrahydropterin. The polypeptide is 6-pyruvoyl tetrahydrobiopterin synthase (PTS) (Pongo abelii (Sumatran orangutan)).